A 555-amino-acid chain; its full sequence is Efflux pump FUS6 (555 aa).

Residues 1-23 (MASAKDAQPAPEKSLSSDPQPEP) form a disordered region. 5 helical membrane-spanning segments follow: residues 31–51 (WLIFVAISLTTFLAALDTSII), 67–87 (LYVWIIDAYLLASTATIPIFA), 97–117 (SLTLIAVCIFTLGSGLCGGAH), 130–150 (GIGGGGILTMSEIVVCDMVSI), and 159–179 (IIGGVWAIAAVVAPVMGGAFA). Asn-181 carries N-linked (GlcNAc...) asparagine glycosylation. The next 3 membrane-spanning stretches (helical) occupy residues 186 to 206 (WIFYINLPIAGVSLVALGLFL), 225 to 245 (WGGSVLLIGSVTSIVLALSWG), and 253 to 273 (GWQTIVPLVIGLLALVAFFAY). Asn-291 is a glycosylation site (N-linked (GlcNAc...) asparagine). 6 helical membrane passes run 297–317 (LLVISFIHSLLLYWICYFLPV), 332–352 (VMLFPIACTSAPAGVAAGITI), 360–380 (VWHFTGFVLMSIACGLFTLLD), 393–413 (ILFGVGTGTVFTSTLPPILAS), 425–445 (AWTFIRNFGSIWGVAIPAAVF), and 501–521 (KVVWQVSLAFCLLGFILCFFV). Residue Asn-545 is glycosylated (N-linked (GlcNAc...) asparagine).

This sequence belongs to the major facilitator superfamily. TCR/Tet family.

Its subcellular location is the membrane. Functionally, efflux pump; part of the gene cluster that mediates the biosynthesis of the mycotoxin fusarin C. Within the cluster, FUS1, FUS2, FUS8 and FUS9 are sufficient for fusarin production. The other FUS cluster members are not essential for fusarin C biosynthesis. The sequence is that of Efflux pump FUS6 from Gibberella fujikuroi (strain CBS 195.34 / IMI 58289 / NRRL A-6831) (Bakanae and foot rot disease fungus).